The following is a 369-amino-acid chain: Anhydro-N-acetylmuramic acid kinase (369 aa).

12–19 (GTSMDGVD) contributes to the ATP binding site.

This sequence belongs to the anhydro-N-acetylmuramic acid kinase family.

The catalysed reaction is 1,6-anhydro-N-acetyl-beta-muramate + ATP + H2O = N-acetyl-D-muramate 6-phosphate + ADP + H(+). It participates in amino-sugar metabolism; 1,6-anhydro-N-acetylmuramate degradation. The protein operates within cell wall biogenesis; peptidoglycan recycling. Functionally, catalyzes the specific phosphorylation of 1,6-anhydro-N-acetylmuramic acid (anhMurNAc) with the simultaneous cleavage of the 1,6-anhydro ring, generating MurNAc-6-P. Is required for the utilization of anhMurNAc either imported from the medium or derived from its own cell wall murein, and thus plays a role in cell wall recycling. The polypeptide is Anhydro-N-acetylmuramic acid kinase (Shewanella pealeana (strain ATCC 700345 / ANG-SQ1)).